Reading from the N-terminus, the 269-residue chain is Imidazoleglycerol-phosphate dehydratase 3, chloroplastic (269 aa).

The transit peptide at 1–51 (MTTAPVVSPSLSRLHSAPASPFPKAPVGSGAGVAFPARPYGPSLRLRSAVM) directs the protein to the chloroplast. Residues Glu-83, 109-117 (HMLDQLASH), 135-139 (HHSNE), Arg-161, and Arg-183 each bind substrate. Mn(2+)-binding residues include His-109, His-135, His-136, and Glu-139. His-207, His-231, His-232, and Glu-235 together coordinate Mn(2+). Residues 231 to 239 (HHIIEATFK) and 261 to 263 (SSK) each bind substrate.

It belongs to the imidazoleglycerol-phosphate dehydratase family. The cofactor is Mn(2+).

The protein resides in the plastid. It localises to the chloroplast. The enzyme catalyses D-erythro-1-(imidazol-4-yl)glycerol 3-phosphate = 3-(imidazol-4-yl)-2-oxopropyl phosphate + H2O. Its pathway is amino-acid biosynthesis; L-histidine biosynthesis; L-histidine from 5-phospho-alpha-D-ribose 1-diphosphate: step 6/9. The protein is Imidazoleglycerol-phosphate dehydratase 3, chloroplastic of Triticum aestivum (Wheat).